Reading from the N-terminus, the 355-residue chain is Trans-3-hydroxy-L-proline dehydratase (355 aa).

Cys111 acts as the Proton acceptor in catalysis. Substrate-binding positions include 112–113 (GH) and 276–277 (GS).

It belongs to the proline racemase family. Homodimer.

It catalyses the reaction trans-3-hydroxy-L-proline = 1-pyrroline-2-carboxylate + H2O. Catalyzes the dehydration of trans-3-hydroxy-L-proline (t3LHyp) to Delta(1)-pyrroline-2-carboxylate (Pyr2C). Together with LhpI, is involved in a metabolic pathway that converts t3LHyp to L-proline. This is Trans-3-hydroxy-L-proline dehydratase from Colwellia psychrerythraea (strain 34H / ATCC BAA-681) (Vibrio psychroerythus).